The primary structure comprises 461 residues: Serine incorporator 5 (461 aa).

Topologically, residues 1 to 36 (MSARCCAGQLACCCGSAGCSLCCGCCPKFRQSRTTR) are extracellular. The chain crosses the membrane as a helical span at residues 37-57 (FMYLFYFILVIALCCVMMTPS). The Cytoplasmic segment spans residues 58–90 (VMKQVKDHIPFFEEFCKKTQAGGDACENLVGYS). Residues 91-111 (AVYRVCFGMACFFALFCLLTL) traverse the membrane as a helical segment. Over 112–125 (KVNNSKSCRAYIHN) the chain is Extracellular. N-linked (GlcNAc...) asparagine glycosylation occurs at asparagine 114. A helical transmembrane segment spans residues 126 to 146 (GFWFFKLLLLGAMCSGAFFIP). The Cytoplasmic segment spans residues 147 to 157 (DQETFLKVWRY). A helical transmembrane segment spans residues 158 to 178 (VGAGGSFLFICIQLLLIVQFA). Residues 179–200 (HKWNKNWTAGTVRNKLWYASLS) are Extracellular-facing. Asparagine 184 is a glycosylation site (N-linked (GlcNAc...) asparagine). Residues 201–221 (LVTLIMYSVAVGGLALMAVFY) traverse the membrane as a helical segment. Over 222–231 (TQWDDCMDNK) the chain is Cytoplasmic. The chain crosses the membrane as a helical span at residues 232-252 (ILLGVHGGLCVLISLVAISPC). Residues 253-260 (VQNRQPHS) are Extracellular-facing. The helical transmembrane segment at 261–281 (GLLQSGLISCYVTYLTFSALT) threads the bilayer. Residues 282–312 (SKPEKKVLDEHGKNVTICAPDFGQDLHRDEN) lie on the Cytoplasmic side of the membrane. The chain crosses the membrane as a helical span at residues 313–333 (MVTWLGTLLLIVCISYSCLTS). Residues 334–392 (TTRSSSDALQSRYGAPELEVARCCFCFGPDGEDTEEQQNVKKGPRVIYDEKKGTVYSYS) lie on the Extracellular side of the membrane. Residues 393–413 (YFHFVFFLASLYVMMTLTSWF) traverse the membrane as a helical segment. The Cytoplasmic portion of the chain corresponds to 414-422 (HYENATIKT). Residues 423-443 (FFSGWSVFWVKMASCWMCVLL) form a helical membrane-spanning segment. Residues 444–461 (YLQTLVAPLCCPSRQFSV) are Extracellular-facing.

Belongs to the TDE1 family.

Its subcellular location is the cell membrane. It carries out the reaction a 1,2-diacyl-sn-glycero-3-phospho-L-serine(in) = a 1,2-diacyl-sn-glycero-3-phospho-L-serine(out). It catalyses the reaction a 1,2-diacyl-sn-glycero-3-phosphocholine(in) = a 1,2-diacyl-sn-glycero-3-phosphocholine(out). The enzyme catalyses a 1,2-diacyl-sn-glycero-3-phosphoethanolamine(in) = a 1,2-diacyl-sn-glycero-3-phosphoethanolamine(out). Functionally, restriction factor required to restrict infectivity of gammaretroviruses: acts by inhibiting an early step of viral infection. Impairs the penetration of the viral particle into the cytoplasm. Non-ATP-dependent, non-specific lipid transporter for phosphatidylserine, phosphatidylcholine, and phosphatidylethanolamine. Functions as a scramblase that flips lipids in both directions across the membrane. Phospholipid scrambling results in gammaretroviral surface exposure of phosphatidylserine and loss of membrane asymmetry, which leads to loss of infectivity. Enhances the incorporation of serine into phosphatidylserine and sphingolipids. May play a role in providing serine molecules for the formation of myelin glycosphingolipids in oligodendrocytes. This chain is Serine incorporator 5 (Serinc5), found in Mus musculus (Mouse).